The sequence spans 306 residues: Agmatinase (306 aa).

Positions 126, 149, 151, 153, 230, and 232 each coordinate Mn(2+).

This sequence belongs to the arginase family. Agmatinase subfamily. Mn(2+) serves as cofactor.

It carries out the reaction agmatine + H2O = urea + putrescine. Its pathway is amine and polyamine biosynthesis; putrescine biosynthesis via agmatine pathway; putrescine from agmatine: step 1/1. Catalyzes the formation of putrescine from agmatine. The chain is Agmatinase from Citrobacter koseri (strain ATCC BAA-895 / CDC 4225-83 / SGSC4696).